The chain runs to 86 residues: uncharacterized protein (86 aa).

Residues 63–85 (VGGRSPSIQNSFFFFFFFFFFFF) form a helical membrane-spanning segment.

The protein localises to the membrane. This is an uncharacterized protein from Dictyostelium discoideum (Social amoeba).